We begin with the raw amino-acid sequence, 112 residues long: Protein FAM32A (112 aa).

A disordered region spans residues 23-58 (TKRKKKKKDKDKAKLLEAMGTSKKNEEEKRRGLDKR). The segment covering 45–58 (KKNEEEKRRGLDKR) has biased composition (basic and acidic residues).

Belongs to the FAM32 family.

It is found in the nucleus. May induce G2 arrest and apoptosis. May also increase cell sensitivity to apoptotic stimuli. The polypeptide is Protein FAM32A (FAM32A) (Bos taurus (Bovine)).